The primary structure comprises 1400 residues: Alpha-(1-&gt;3)-arabinofuranosyltransferase (1400 aa).

The signal sequence occupies residues 1–30 (MAPLSRKWLPVVGAVALALTFAQSPGQVSP). The next 8 membrane-spanning stretches (helical) occupy residues 67–87 (YLFPHGTFFVIGHLLGVPGWV), 91–111 (LWWAVLLTVGFWGLLRVAEAL), 139–159 (ISSETLPMMLAPWVLLPTILA), 179–199 (VALMGAVNAIATLAGCLPAVI), 215–235 (AWWLLAMALATLWWVMALTQL), 282–302 (LVTGSAAILGTCLVAAAGLAG), 314–334 (LVTMLLVGVVLLAVGHRGGLA), and 401–421 (VAVAVVALTALMVSTSLAWTG). Positions 700-883 (AEPVVGGWTG…WDLGSELLGR (184 aa)) constitute an F5/8 type C domain. 4 consecutive transmembrane segments (helical) span residues 1256–1276 (LYRASLAIGLALLPLLALLAF), 1297–1317 (WAAAGVLAAGAVIASIAGVMV), 1338–1358 (VTVGLAAGGLILAGAALSRHP), and 1369–1389 (WASVQLLALISVSVVAASVVA).

It localises to the membrane. The enzyme catalyses Adds an alpha-D-arabinofuranosyl group from trans,octacis-decaprenylphospho-beta-D-arabinofuranose at the 3-O-position of an alpha-(1-&gt;5)-arabinofuranan chain attached to a beta-(1-&gt;5)-galactofuranan chain.. Its pathway is cell wall biogenesis; cell wall polysaccharide biosynthesis. Functionally, involved in the biosynthesis of the arabinogalactan (AG) region of the mycolylarabinogalactan-peptidoglycan (mAGP) complex, an essential component of the mycobacterial cell wall. Catalyzes the addition of an arabinofuranosyl (Araf) residue from the sugar donor decaprenyl-phospho-arabinose (DPA) on the C-3 of an alpha-(1-&gt;5)-linked Araf from the arabinan backbone of AG. This is Alpha-(1-&gt;3)-arabinofuranosyltransferase (aftD) from Mycobacterium tuberculosis (strain ATCC 25618 / H37Rv).